The chain runs to 273 residues: Putative phosphoenolpyruvate synthase regulatory protein (273 aa).

Residue 153-160 (AVSRAGKT) participates in ADP binding.

The protein belongs to the pyruvate, phosphate/water dikinase regulatory protein family. PSRP subfamily.

The catalysed reaction is [pyruvate, water dikinase] + ADP = [pyruvate, water dikinase]-phosphate + AMP + H(+). It catalyses the reaction [pyruvate, water dikinase]-phosphate + phosphate + H(+) = [pyruvate, water dikinase] + diphosphate. Its function is as follows. Bifunctional serine/threonine kinase and phosphorylase involved in the regulation of the phosphoenolpyruvate synthase (PEPS) by catalyzing its phosphorylation/dephosphorylation. The sequence is that of Putative phosphoenolpyruvate synthase regulatory protein from Xylella fastidiosa (strain M23).